The sequence spans 100 residues: Large ribosomal subunit protein eL31 (100 aa).

The protein belongs to the eukaryotic ribosomal protein eL31 family.

In Hyperthermus butylicus (strain DSM 5456 / JCM 9403 / PLM1-5), this protein is Large ribosomal subunit protein eL31.